We begin with the raw amino-acid sequence, 455 residues long: Argininosuccinate lyase (455 aa).

The protein belongs to the lyase 1 family. Argininosuccinate lyase subfamily.

It is found in the cytoplasm. The enzyme catalyses 2-(N(omega)-L-arginino)succinate = fumarate + L-arginine. It functions in the pathway amino-acid biosynthesis; L-arginine biosynthesis; L-arginine from L-ornithine and carbamoyl phosphate: step 3/3. The polypeptide is Argininosuccinate lyase (Roseiflexus castenholzii (strain DSM 13941 / HLO8)).